The chain runs to 1512 residues: DNA (cytosine-5)-methyltransferase 2 (1512 aa).

Residues 1-22 show a composition bias toward basic and acidic residues; that stretch reads METKVGKQKKRSVDSNDDVSKE. 2 disordered regions span residues 1 to 35 and 634 to 678; these read METK…RNFK and AIHE…GNSE. Residues 638–662 are compositionally biased toward acidic residues; sequence VEEEEIEEDEEEDENEEDDIEEEAV. BAH domains follow at residues 707–841 and 909–1026; these read ETVA…FSLP and TTLK…KQFP. One can recognise an SAM-dependent MTase C5-type domain in the interval 1071 to 1505; that stretch reads LATLDIFAGC…RKLKEALYLK (435 aa). The active site involves Cys1176.

The protein belongs to the class I-like SAM-binding methyltransferase superfamily. C5-methyltransferase family. In terms of tissue distribution, expressed at low levels in vegetative and floral organs.

The protein localises to the nucleus. It carries out the reaction a 2'-deoxycytidine in DNA + S-adenosyl-L-methionine = a 5-methyl-2'-deoxycytidine in DNA + S-adenosyl-L-homocysteine + H(+). Its function is as follows. Maintains chromatin CpG methylation that plays a role in genomic imprinting, regulation of embryogenesis and seed viability. Required for proper patterns of CG DNA methylation in dividing cells. The sequence is that of DNA (cytosine-5)-methyltransferase 2 (MET2) from Arabidopsis thaliana (Mouse-ear cress).